The sequence spans 337 residues: MANSC domain-containing protein 4 (337 aa).

The signal sequence occupies residues 1–18 (MRAVELLLLLGLASMVHG). Over 19–278 (LCSPTVFYRD…SSENEEPWDG (260 aa)) the chain is Extracellular. The MANSC domain maps to 33-113 (RFPGMLLDLE…LEPGASAILY (81 aa)). Asn-114, Asn-227, and Asn-251 each carry an N-linked (GlcNAc...) asparagine glycan. Composition is skewed to polar residues over residues 216–230 (SPST…NKTI) and 239–260 (TRVS…VNKT). The disordered stretch occupies residues 216 to 277 (SPSTDFTHSP…HSSENEEPWD (62 aa)). The chain crosses the membrane as a helical span at residues 279-299 (APASAGVWLACVTLGAAVISL). At 300–337 (CCRVVLGTSRCCGKRQGWSHMGQRSASGCRRNTLKENS) the chain is on the cytoplasmic side. The tract at residues 314 to 337 (RQGWSHMGQRSASGCRRNTLKENS) is disordered.

It is found in the membrane. This Mus musculus (Mouse) protein is MANSC domain-containing protein 4 (Mansc4).